Consider the following 1344-residue polypeptide: Period circadian protein homolog 2 (1344 aa).

2 disordered regions span residues 1–21 and 42–112; these read MDCIEVRGFYSSTEEQNPEQQ and EYSG…NGKD. A compositionally biased stretch (polar residues) spans 10–21; that stretch reads YSSTEEQNPEQQ. The span at 78-89 shows a compositional bias: low complexity; it reads SSGSSGNDFSGN. Positions 99–111 are enriched in basic and acidic residues; sequence HDSHGHESDENGK. The Nuclear export signal 1 motif lies at 161 to 170; that stretch reads LLKTLQELKA. Positions 231–298 constitute a PAS 1 domain; that stretch reads ITSEYIMKNA…FYTSTTPYRL (68 aa). Residues 358 to 362 carry the LXXLL motif; the sequence is LCCVL. Residues 371 to 437 form the PAS 2 domain; sequence YEAPRIPPDK…MLAIHKKILQ (67 aa). The PAC domain occupies 445 to 488; sequence YSPIRFCTRNGDYITMDTSWSSFINPWSRKVSFIIGRHKVRTGP. A Nuclear export signal 2 motif is present at residues 512–521; that stretch reads ITEQIYRLLL. 5 disordered regions span residues 531–609, 661–686, 823–894, 1038–1065, and 1107–1126; these read GYGS…QVKD, AKRKCEPSSSVNSSVHEQKASVNAIQ, LQDK…WSPS, TETRNEPSRSCTPQSVGPQDQASPPLFQ, and TTDAGSGKGSLPAESPMDAQ. A compositionally biased stretch (low complexity) spans 549-559; that stretch reads SSSDSTGNNND. 2 stretches are compositionally biased toward basic and acidic residues: residues 560-573 and 583-597; these read DTQKDKTISQDARK and TENKGKLEYKREPSA. Over residues 667-684 the composition is skewed to polar residues; that stretch reads PSSSVNSSVHEQKASVNA. Positions 825-836 are enriched in basic and acidic residues; that stretch reads DKPKGRPGERGG. Residues 851-865 carry the Nuclear localization signal motif; that stretch reads KKSGKNRKSKRIKPQ. A compositionally biased stretch (basic residues) spans 852–862; that stretch reads KSGKNRKSKRI. 3 stretches are compositionally biased toward polar residues: residues 865–875, 885–894, and 1045–1059; these read QESSDSTTSGT, GLNTTAWSPS, and SRSCTPQSVGPQDQA. The LXXLL signature appears at 1138 to 1142; the sequence is LDILL. Over residues 1149 to 1172 the composition is skewed to low complexity; sequence GTGSASSGSGVSAAAESLGSGSNG. Residues 1149 to 1197 form a disordered region; the sequence is GTGSASSGSGVSAAAESLGSGSNGCDMSGSRTGSSETSHTSKYFGSIDS. Residues 1177–1197 are compositionally biased toward polar residues; that stretch reads GSRTGSSETSHTSKYFGSIDS. The tract at residues 1244-1344 is CRY binding domain; the sequence is SRDLETVLKE…PLSQVNEEQT (101 aa).

In terms of assembly, component of the circadian clock oscillator which includes the CRY proteins, CLOCK or NPAS2, BMAL1 or BMAL2, CSNK1E, and the PER proteins. Interacts directly with PER3, and through a C-terminal domain, with CRY1 and CRY2.

It localises to the nucleus. It is found in the cytoplasm. Transcriptional repressor which forms a core component of the circadian clock. The circadian clock, an internal time-keeping system, regulates various physiological processes through the generation of approximately 24 hour circadian rhythms in gene expression, which are translated into rhythms in metabolism and behavior. It is derived from the Latin roots 'circa' (about) and 'diem' (day) and acts as an important regulator of a wide array of physiological functions including metabolism, sleep, body temperature, blood pressure, endocrine, immune, cardiovascular, and renal function. Consists of two major components: the central clock, residing in the suprachiasmatic nucleus (SCN) of the brain, and the peripheral clocks that are present in nearly every tissue and organ system. Both the central and peripheral clocks can be reset by environmental cues, also known as Zeitgebers (German for 'timegivers'). The predominant Zeitgeber for the central clock is light, which is sensed by retina and signals directly to the SCN. The central clock entrains the peripheral clocks through neuronal and hormonal signals, body temperature and feeding-related cues, aligning all clocks with the external light/dark cycle. Circadian rhythms allow an organism to achieve temporal homeostasis with its environment at the molecular level by regulating gene expression to create a peak of protein expression once every 24 hours to control when a particular physiological process is most active with respect to the solar day. Transcription and translation of core clock components (CLOCK, NPAS2, BMAL1, BMAL2, PER1, PER2, PER3, CRY1 and CRY2) plays a critical role in rhythm generation, whereas delays imposed by post-translational modifications (PTMs) are important for determining the period (tau) of the rhythms (tau refers to the period of a rhythm and is the length, in time, of one complete cycle). A diurnal rhythm is synchronized with the day/night cycle, while the ultradian and infradian rhythms have a period shorter and longer than 24 hours, respectively. Disruptions in the circadian rhythms contribute to the pathology of cardiovascular diseases, cancer, metabolic syndrome and aging. A transcription/translation feedback loop (TTFL) forms the core of the molecular circadian clock mechanism. Transcription factors, CLOCK or NPAS2 and BMAL1 or BMAL2, form the positive limb of the feedback loop, act in the form of a heterodimer and activate the transcription of core clock genes and clock-controlled genes (involved in key metabolic processes), harboring E-box elements (5'-CACGTG-3') within their promoters. The core clock genes: PER1/2/3 and CRY1/2 which are transcriptional repressors form the negative limb of the feedback loop and interact with the CLOCK|NPAS2-BMAL1|BMAL2 heterodimer inhibiting its activity and thereby negatively regulating their own expression. This heterodimer also activates nuclear receptors NR1D1/2 and RORA/B/G, which form a second feedback loop and which activate and repress BMAL1 transcription, respectively. PER1 and PER2 proteins transport CRY1 and CRY2 into the nucleus with appropriate circadian timing, but also contribute directly to repression of clock-controlled target genes through interaction with several classes of RNA-binding proteins, helicases and others transcriptional repressors. PER appears to regulate circadian control of transcription by at least three different modes. First, interacts directly with the CLOCK-BMAL1 at the tail end of the nascent transcript peak to recruit complexes containing the SIN3-HDAC that remodel chromatin to repress transcription. Second, brings H3K9 methyltransferases such as SUV39H1 and SUV39H2 to the E-box elements of the circadian target genes, like PER2 itself or PER1. The recruitment of each repressive modifier to the DNA seems to be very precisely temporally orchestrated by the large PER complex, the deacetylases acting before than the methyltransferases. Additionally, large PER complexes are also recruited to the target genes 3' termination site through interactions with RNA-binding proteins and helicases that may play a role in transcription termination to regulate transcription independently of CLOCK-BMAL1 interactions. This Gallus gallus (Chicken) protein is Period circadian protein homolog 2 (PER2).